The sequence spans 424 residues: Putative pachytene checkpoint protein 2 (424 aa).

Gly-179–Thr-186 lines the ATP pocket.

It belongs to the AAA ATPase family. PCH2 subfamily.

Functionally, plays a key role in chromosome recombination during meiosis. The protein is Putative pachytene checkpoint protein 2 (pch-2) of Caenorhabditis elegans.